A 213-amino-acid chain; its full sequence is Large ribosomal subunit protein uL3 (213 aa).

Position 151 is an N5-methylglutamine (Gln-151).

The protein belongs to the universal ribosomal protein uL3 family. As to quaternary structure, part of the 50S ribosomal subunit. Forms a cluster with proteins L14 and L19. Post-translationally, methylated by PrmB.

Its function is as follows. One of the primary rRNA binding proteins, it binds directly near the 3'-end of the 23S rRNA, where it nucleates assembly of the 50S subunit. The protein is Large ribosomal subunit protein uL3 of Rhizobium etli (strain CIAT 652).